The sequence spans 99 residues: Bublin coiled-coil protein (99 aa).

The stretch at 34–71 (LDQINSCLDDIEERNDALNGKLQELLESNRAARRDFRQ) forms a coiled coil. Residues 66-78 (RRDFRQQITDHAD) show a composition bias toward basic and acidic residues. Positions 66–99 (RRDFRQQITDHADLPPPANDDDEDEQSRDAQKKD) are disordered.

The protein belongs to the UPF0184 (EST00098) family.

It localises to the cell junction. Its subcellular location is the cytoplasm. The protein localises to the cytoskeleton. In terms of biological role, essential for intermediate filament organization in intestinal cells, interacts with intermediate filament and regulates intestinal lumen morphology. In Danio rerio (Zebrafish), this protein is Bublin coiled-coil protein (bbln).